A 561-amino-acid polypeptide reads, in one-letter code: Ankyrin repeat protein OPG189 (561 aa).

ANK repeat units lie at residues Y68–K98, Y172–K208, Y212–S242, N246–A275, F279–I307, Y342–T371, and S375–I404.

It belongs to the orthopoxvirus OPG189 protein family.

In terms of biological role, contributes to viral release without involving rearrangement of host actin. This Cynomys gunnisoni (Gunnison's prairie dog) protein is Ankyrin repeat protein OPG189 (OPG189).